The following is a 382-amino-acid chain: Protein farnesyltransferase subunit beta (382 aa).

PFTB repeat units follow at residues Cys-78–Asp-119, Arg-129–Gly-170, Phe-178–Gly-219, Glu-226–Ala-268, and Pro-286–Ala-328. (2E,6E)-farnesyl diphosphate contacts are provided by residues His-204 to Tyr-207 and Arg-247 to Lys-250. The Zn(2+) site is built by Asp-253 and Cys-255. Tyr-256–Trp-259 serves as a coordination point for (2E,6E)-farnesyl diphosphate. His-316 contributes to the Zn(2+) binding site.

This sequence belongs to the protein prenyltransferase subunit beta family. Heterodimer of an alpha(cwp1) and a beta(cpp1) subunit. Zn(2+) serves as cofactor.

The catalysed reaction is L-cysteinyl-[protein] + (2E,6E)-farnesyl diphosphate = S-(2E,6E)-farnesyl-L-cysteinyl-[protein] + diphosphate. Catalyzes the transfer of a farnesyl moiety from farnesyl diphosphate to a cysteine at the fourth position from the C-terminus of several proteins. The beta(cpp1) subunit is responsible for peptide-binding. The protein is Protein farnesyltransferase subunit beta (cpp1) of Schizosaccharomyces pombe (strain 972 / ATCC 24843) (Fission yeast).